A 1295-amino-acid chain; its full sequence is DNA-directed RNA polymerase subunit beta' (1295 aa).

The Zn(2+) site is built by Cys-60, Cys-62, Cys-75, and Cys-78. Asp-516, Asp-518, and Asp-520 together coordinate Mg(2+). Zn(2+) is bound by residues Cys-841, Cys-914, Cys-921, and Cys-924.

Belongs to the RNA polymerase beta' chain family. As to quaternary structure, the RNAP catalytic core consists of 2 alpha, 1 beta, 1 beta' and 1 omega subunit. When a sigma factor is associated with the core the holoenzyme is formed, which can initiate transcription. The cofactor is Mg(2+). Requires Zn(2+) as cofactor.

It carries out the reaction RNA(n) + a ribonucleoside 5'-triphosphate = RNA(n+1) + diphosphate. Its function is as follows. DNA-dependent RNA polymerase catalyzes the transcription of DNA into RNA using the four ribonucleoside triphosphates as substrates. The protein is DNA-directed RNA polymerase subunit beta' of Dehalococcoides mccartyi (strain ATCC BAA-2100 / JCM 16839 / KCTC 5957 / BAV1).